We begin with the raw amino-acid sequence, 61 residues long: uncharacterized protein (61 aa).

The tract at residues 36–61 (RLTDVPPQPNSPPDNVFNPDQPRMGP) is disordered.

It belongs to the ART2/RRT15 family.

This is an uncharacterized protein from Saccharomyces cerevisiae (strain ATCC 204508 / S288c) (Baker's yeast).